The primary structure comprises 142 residues: Large ribosomal subunit protein uL22c (142 aa).

Belongs to the universal ribosomal protein uL22 family. Part of the 50S ribosomal subunit.

It is found in the plastid. It localises to the chloroplast. Functionally, this protein binds specifically to 23S rRNA. Its function is as follows. The globular domain of the protein is located near the polypeptide exit tunnel on the outside of the subunit, while an extended beta-hairpin is found that lines the wall of the exit tunnel in the center of the 70S ribosome. The chain is Large ribosomal subunit protein uL22c (rpl22) from Ceratophyllum demersum (Rigid hornwort).